Here is a 244-residue protein sequence, read N- to C-terminus: MSQARGFDRTITVFSPEGRLYQVEYAFKAFNNAGITSVGVTGKNCACVISQKKVPDKLIDASTVKHVFPITKGIGCVMTGSIADARAQVSRARSEAAEFEYKNGYPMPCDVLAKRMANIAQVSTQRAAMRPLGVAMTLVAVDDEIGPSLFKLDPAGFYIGYKATSAGPKQTETINWLEKRFKKDGIPSNLTDTVETGIQALMSSLSTDFKSTELQIGVVEDDKPFRVLSVEEIEAHLQSIAEKD.

The protein belongs to the peptidase T1A family. As to quaternary structure, the 26S proteasome consists of a 20S proteasome core and two 19S regulatory subunits. The 20S proteasome core is composed of 28 subunits that are arranged in four stacked rings, resulting in a barrel-shaped structure. The two end rings are each formed by seven alpha subunits, and the two central rings are each formed by seven beta subunits. The catalytic chamber with the active sites is on the inside of the barrel.

It is found in the cytoplasm. The protein localises to the nucleus. In terms of biological role, the proteasome is a multicatalytic proteinase complex which is characterized by its ability to cleave peptides with Arg, Phe, Tyr, Leu, and Glu adjacent to the leaving group at neutral or slightly basic pH. The proteasome has an ATP-dependent proteolytic activity. In Schizosaccharomyces pombe (strain 972 / ATCC 24843) (Fission yeast), this protein is Probable proteasome subunit alpha type-1.